Consider the following 480-residue polypeptide: Endothelial transcription factor GATA-2 (480 aa).

A Phosphoserine modification is found at Ser-73. Position 86 is an asymmetric dimethylarginine (Arg-86). The interval 166–208 (SGSHLFGFPPTPPKEVSPDPSTTGAASPASPSAGGSVARGEDK) is disordered. Residues 183–201 (PDPSTTGAASPASPSAGGS) show a composition bias toward low complexity. A Phosphoserine modification is found at Ser-192. 2 consecutive GATA-type zinc fingers follow at residues 295–319 (CVNC…CNAC) and 349–373 (CANC…CNAC). Lys-389 is covalently cross-linked (Glycyl lysine isopeptide (Lys-Gly) (interchain with G-Cter in SUMO2)). Residues 457-480 (TPIHPSSSLSFGHPHPSSMVTAMG) form a disordered region.

Interacts with BRD3. Interacts with AR and CCAR1. Interacts with MDFIC.

The protein localises to the nucleus. Functionally, transcriptional activator which regulates endothelin-1 gene expression in endothelial cells. Binds to the consensus sequence 5'-AGATAG-3'. Plays an important role in the regulation of phagocytosis in alveolar macrophages, particularly during P.carinii infection. In Rattus norvegicus (Rat), this protein is Endothelial transcription factor GATA-2.